Consider the following 195-residue polypeptide: Phosphoheptose isomerase (195 aa).

The SIS domain occupies 35 to 195; that stretch reads LCVALYRGDK…EKEIFGDGVN (161 aa). 51–53 serves as a coordination point for substrate; sequence NGG. Zn(2+)-binding residues include H60 and E64. Substrate is bound by residues E64, 93 to 94, 119 to 121, S124, and Q171; these read ND and STS. Zn(2+)-binding residues include Q171 and H179.

This sequence belongs to the SIS family. GmhA subfamily. Homotetramer. Zn(2+) serves as cofactor.

It is found in the cytoplasm. It catalyses the reaction 2 D-sedoheptulose 7-phosphate = D-glycero-alpha-D-manno-heptose 7-phosphate + D-glycero-beta-D-manno-heptose 7-phosphate. Its pathway is carbohydrate biosynthesis; D-glycero-D-manno-heptose 7-phosphate biosynthesis; D-glycero-alpha-D-manno-heptose 7-phosphate and D-glycero-beta-D-manno-heptose 7-phosphate from sedoheptulose 7-phosphate: step 1/1. Catalyzes the isomerization of sedoheptulose 7-phosphate in D-glycero-D-manno-heptose 7-phosphate. The sequence is that of Phosphoheptose isomerase from Sulfurimonas denitrificans (strain ATCC 33889 / DSM 1251) (Thiomicrospira denitrificans (strain ATCC 33889 / DSM 1251)).